Here is a 420-residue protein sequence, read N- to C-terminus: 5'-deoxyadenosine deaminase (420 aa).

Histidine 55 and histidine 57 together coordinate Zn(2+). Glutamate 84 and histidine 176 together coordinate substrate. Residue histidine 203 coordinates Zn(2+). Residues glutamate 206 and aspartate 292 each coordinate substrate. Aspartate 292 serves as a coordination point for Zn(2+).

This sequence belongs to the metallo-dependent hydrolases superfamily. MTA/SAH deaminase family. Homotetramer. The cofactor is Zn(2+).

The catalysed reaction is 5'-deoxyadenosine + H2O + H(+) = 5'-deoxyinosine + NH4(+). It carries out the reaction S-adenosyl-L-homocysteine + H2O + H(+) = S-inosyl-L-homocysteine + NH4(+). The enzyme catalyses S-methyl-5'-thioadenosine + H2O + H(+) = S-methyl-5'-thioinosine + NH4(+). It catalyses the reaction adenosine + H2O + H(+) = inosine + NH4(+). Its pathway is amino-acid biosynthesis; S-adenosyl-L-methionine biosynthesis. Catalyzes the deamination of three SAM-derived enzymatic products, namely 5'-deoxyadenosine, S-adenosyl-L-homocysteine, and 5'-methylthioadenosine, to produce the inosine analogs. Can also deaminate adenosine. The preferred substrate for this enzyme is 5'-deoxyadenosine, but all these substrates are efficiently deaminated. Likely functions in a S-adenosyl-L-methionine (SAM) recycling pathway from S-adenosyl-L-homocysteine (SAH) produced from SAM-dependent methylation reactions. May also be involved in the recycling of 5'-deoxyadenosine, whereupon the 5'-deoxyribose moiety of 5'-deoxyinosine is further metabolized to deoxyhexoses used for the biosynthesis of aromatic amino acids in methanogens. In Methanocaldococcus jannaschii (strain ATCC 43067 / DSM 2661 / JAL-1 / JCM 10045 / NBRC 100440) (Methanococcus jannaschii), this protein is 5'-deoxyadenosine deaminase.